Here is a 1262-residue protein sequence, read N- to C-terminus: Structural maintenance of chromosomes protein 1 (1262 aa).

A coiled-coil region spans residues 171-497 (SRSHEFQAEY…VAVVRQLSEA (327 aa)). Residues 524-642 (SVYGRLVDLC…ESQEDAKQLA (119 aa)) form the SMC hinge domain. The stretch at 680–937 (KKWDEKVVKQ…RLESLLTKKQ (258 aa)) forms a coiled coil. Positions 965 to 994 (EYEEDDGDDTASQSSQSATDGPSVSEEQIQ) are disordered. A compositionally biased stretch (polar residues) spans 974-991 (TASQSSQSATDGPSVSEE). Residues 1017-1086 (DGVRQMSNRL…QQFEKVKTDR (70 aa)) are a coiled coil. Residues 1148–1183 (LSGGEKTIAALALLFAVHGRNPAPFFVLDEIDAALD) carry the DA-box motif.

It belongs to the SMC family. SMC1 subfamily. In terms of assembly, component of the cohesin complex, composed of the smc-1 and smc-3 heterodimer attached via their SMC hinge domain, scc-1 which links them, and scc-3. Interacts with smc-3, scc-1, scc-3 and tim-1.

Its subcellular location is the nucleus. The protein localises to the chromosome. Functionally, involved in chromosome cohesion during cell cycle and in DNA repair. Required for chromosome segregation during mitosis. Central component of cohesin complex. The cohesin complex is required for the cohesion of sister chromatids after DNA replication. The cohesin complex apparently forms a large proteinaceous ring within which sister chromatids can be trapped. At anaphase, the complex is cleaved and dissociates from chromatin, allowing sister chromatids to segregate. The chain is Structural maintenance of chromosomes protein 1 from Caenorhabditis elegans.